We begin with the raw amino-acid sequence, 240 residues long: Uridylate kinase (240 aa).

12–15 contacts ATP; the sequence is KLSG. Gly-54 lines the UMP pocket. Residues Gly-55 and Arg-59 each coordinate ATP. UMP is bound by residues Asp-74 and 135–142; that span reads TGNPFFTT. Positions 162, 168, and 171 each coordinate ATP.

The protein belongs to the UMP kinase family. Homohexamer.

Its subcellular location is the cytoplasm. The enzyme catalyses UMP + ATP = UDP + ADP. Its pathway is pyrimidine metabolism; CTP biosynthesis via de novo pathway; UDP from UMP (UMPK route): step 1/1. Inhibited by UTP. In terms of biological role, catalyzes the reversible phosphorylation of UMP to UDP. This chain is Uridylate kinase, found in Xanthomonas oryzae pv. oryzae (strain KACC10331 / KXO85).